The chain runs to 402 residues: Nuclear hormone receptor family member nhr-96 (402 aa).

The segment at residues 4 to 79 is a DNA-binding region (nuclear receptor); it reads FGLCAVCGQV…VGMDVKKIQQ (76 aa). NR C4-type zinc fingers lie at residues 7–27 and 44–67; these read CAVC…CRSC and CVKA…LKRC. Residues 154–402 form the NR LBD domain; it reads NYYNSLELLT…FSDPEMFELT (249 aa).

This sequence belongs to the nuclear hormone receptor family.

It localises to the nucleus. Functionally, orphan nuclear receptor. This Caenorhabditis elegans protein is Nuclear hormone receptor family member nhr-96 (nhr-96).